Reading from the N-terminus, the 213-residue chain is Pyridoxine/pyridoxamine 5'-phosphate oxidase (213 aa).

Residues 8 to 11 (RREY) and Lys67 contribute to the substrate site. Residues 62-67 (RIVLLK), 77-78 (FT), Arg83, Lys84, and Gln106 contribute to the FMN site. 3 residues coordinate substrate: Tyr124, Arg128, and Ser132. FMN-binding positions include 141–142 (QS) and Trp186. Residue 192–194 (RLH) participates in substrate binding. Arg196 provides a ligand contact to FMN.

The protein belongs to the pyridoxamine 5'-phosphate oxidase family. As to quaternary structure, homodimer. The cofactor is FMN.

It catalyses the reaction pyridoxamine 5'-phosphate + O2 + H2O = pyridoxal 5'-phosphate + H2O2 + NH4(+). The enzyme catalyses pyridoxine 5'-phosphate + O2 = pyridoxal 5'-phosphate + H2O2. The protein operates within cofactor metabolism; pyridoxal 5'-phosphate salvage; pyridoxal 5'-phosphate from pyridoxamine 5'-phosphate: step 1/1. It participates in cofactor metabolism; pyridoxal 5'-phosphate salvage; pyridoxal 5'-phosphate from pyridoxine 5'-phosphate: step 1/1. Catalyzes the oxidation of either pyridoxine 5'-phosphate (PNP) or pyridoxamine 5'-phosphate (PMP) into pyridoxal 5'-phosphate (PLP). This Shewanella woodyi (strain ATCC 51908 / MS32) protein is Pyridoxine/pyridoxamine 5'-phosphate oxidase.